The sequence spans 194 residues: MIPAIIGTRPNNSIALHKSGIRLLGVDDSPFRRGQQKSFIVGVIMRLDGYIEKVMKAQITIDGNDVTERISNMALKFKDIVRVIVLSGISFGGFNICDIELLFKLTGIPVISLFEKGGSASEMINAINKHLGDQEKIGILKRLKPIALNNNGYTIMANLAGIESESASRIIRMNTVRGKMPEAVRVPDLIAKIL.

It belongs to the UPF0215 family.

The sequence is that of UPF0215 protein TV0037 from Thermoplasma volcanium (strain ATCC 51530 / DSM 4299 / JCM 9571 / NBRC 15438 / GSS1).